Here is a 1193-residue protein sequence, read N- to C-terminus: Pyruvate carboxylase (1193 aa).

The 453-residue stretch at Q41 to E493 folds into the Biotin carboxylation domain. ATP contacts are provided by K159, E243, and H278. One can recognise an ATP-grasp domain in the interval R163 to A360. R335 is a catalytic residue. Residues C579–R847 enclose the Pyruvate carboxyltransferase domain. Residues R587–Q591 and R660 each bind substrate. D588 contacts a divalent metal cation. A divalent metal cation is bound by residues K756, H786, and H788. Position 756 is an N6-carboxylysine (K756). T921 provides a ligand contact to substrate. The Biotinyl-binding domain occupies K1116–T1191. N6-biotinyllysine is present on K1157.

Biotin is required as a cofactor. Requires Zn(2+) as cofactor.

The protein resides in the cytoplasm. It carries out the reaction hydrogencarbonate + pyruvate + ATP = oxaloacetate + ADP + phosphate + H(+). It functions in the pathway carbohydrate biosynthesis; gluconeogenesis. Pyruvate carboxylase catalyzes a 2-step reaction, involving the ATP-dependent carboxylation of the covalently attached biotin in the first step and the transfer of the carboxyl group to pyruvate in the second. The chain is Pyruvate carboxylase (pyc) from Aspergillus terreus (strain NIH 2624 / FGSC A1156).